The following is a 383-amino-acid chain: Odorant receptor 94b (383 aa).

At 1-41 (MESTNRLSAIQTLLVIQRWIGLLKWENEGEDGVLTWLKRIY) the chain is on the cytoplasmic side. The chain crosses the membrane as a helical span at residues 42-62 (PFVLHLPLTFTYIALMWYEAI). Over 63–70 (TSSDFEEA) the chain is Extracellular. A helical transmembrane segment spans residues 71-91 (GQVLYMSITELALVTKLLNIW). The Cytoplasmic portion of the chain corresponds to 92 to 130 (YRRHEAASLIHELQHDPAFNLRNSEEIKFWQQNQRNFKR). The chain crosses the membrane as a helical span at residues 131–151 (IFYWYIWGSLFVAVMGYISVF). The Extracellular portion of the chain corresponds to 152-174 (FQEDYELPFGYYVPFEWRTRERY). Residues 175–195 (FYAWGYNVVAMTLCCLSNILL) traverse the membrane as a helical segment. Over 196–250 (DTLGCYFMFHIASLFRLLGMRLEALKNAAEEKARPELRRIFQLHTKVRRLTRECE) the chain is Cytoplasmic. A helical transmembrane segment spans residues 251-271 (VLVSPYVLSQVVFSAFIICFS). The Extracellular portion of the chain corresponds to 272–284 (AYRLVHMGFKQRP). Residues 285–305 (GLFVTTVQFVAVMIVQIFLPC) traverse the membrane as a helical segment. The Cytoplasmic portion of the chain corresponds to 306-358 (YYGNELTFHANALTNSVFGTNWLEYSVGTRKLLNCYMEFLKRPVKVRAGVFFE). Residues 359–379 (IGLPIFVKTINNAYSFFALLL) form a helical membrane-spanning segment. Topologically, residues 380 to 383 (KISK) are extracellular.

The protein belongs to the insect chemoreceptor superfamily. Heteromeric odorant receptor channel (TC 1.A.69) family. Or2a subfamily. Interacts with Orco. Complexes exist early in the endomembrane system in olfactory sensory neurons (OSNs), coupling these complexes to the conserved ciliary trafficking pathway.

It is found in the cell membrane. Odorant receptor which mediates acceptance or avoidance behavior, depending on its substrates. The odorant receptor repertoire encodes a large collection of odor stimuli that vary widely in identity, intensity, and duration. May form a complex with Orco to form odorant-sensing units, providing sensitive and prolonged odorant signaling and calcium permeability. This chain is Odorant receptor 94b (Or94b), found in Drosophila melanogaster (Fruit fly).